Reading from the N-terminus, the 560-residue chain is Zorya protein ZorC (560 aa).

Its function is as follows. Component of antiviral defense system Zorya type I, composed of ZorA, ZorB, ZorC and ZorD. Expression of Zorya type I in E.coli (strain MG1655) confers 10,000-fold resistance to phage SECphi27, 100-fold resistance to lambda, and 10-fold resistance to T7. While most T7 infected Zorya-containing cells undergo abortive infection, a minority produce viable phage progeny. These eventually accumulate to a high multiplicity of infection, leading to culture collapse by 2 hours after initial infection. ZorA and ZorB probably assemble in the cell inner membrane and exert their effect there. The protein is Zorya protein ZorC of Escherichia coli O139:H28 (strain E24377A / ETEC).